Reading from the N-terminus, the 1375-residue chain is DNA-directed RNA polymerase subunit beta' (1375 aa).

Residues Cys-70, Cys-72, Cys-85, and Cys-88 each coordinate Zn(2+). Mg(2+) is bound by residues Asp-460, Asp-462, and Asp-464. Zn(2+)-binding residues include Cys-800, Cys-874, Cys-881, and Cys-884.

The protein belongs to the RNA polymerase beta' chain family. In terms of assembly, the RNAP catalytic core consists of 2 alpha, 1 beta, 1 beta' and 1 omega subunit. When a sigma factor is associated with the core the holoenzyme is formed, which can initiate transcription. Requires Mg(2+) as cofactor. It depends on Zn(2+) as a cofactor.

The catalysed reaction is RNA(n) + a ribonucleoside 5'-triphosphate = RNA(n+1) + diphosphate. Its function is as follows. DNA-dependent RNA polymerase catalyzes the transcription of DNA into RNA using the four ribonucleoside triphosphates as substrates. This is DNA-directed RNA polymerase subunit beta' from Bdellovibrio bacteriovorus (strain ATCC 15356 / DSM 50701 / NCIMB 9529 / HD100).